The primary structure comprises 450 residues: ADP-specific phosphofructokinase (450 aa).

The region spanning 1-449 (MIPEHLSIYT…FLTYLEFLKR (449 aa)) is the ADPK domain. Glu260, Glu290, and Asp433 together coordinate Mg(2+). Residue Asp433 is the Proton acceptor of the active site.

Belongs to the carbohydrate kinase PfkC family. It depends on Mg(2+) as a cofactor.

It localises to the cytoplasm. It catalyses the reaction beta-D-fructose 6-phosphate + ADP = beta-D-fructose 1,6-bisphosphate + AMP + H(+). Its pathway is carbohydrate degradation; glycolysis. Its function is as follows. Catalyzes the phosphorylation of fructose 6-phosphate to fructose 1,6-bisphosphate using ADP as the phosphate donor. The protein is ADP-specific phosphofructokinase of Pyrococcus horikoshii (strain ATCC 700860 / DSM 12428 / JCM 9974 / NBRC 100139 / OT-3).